Consider the following 685-residue polypeptide: MAEWLLSASWQRRAKAMTAAAGSAGRAAVPLLLCALLAPGGAYVLDDSDGLGREFDGIGAVSGGGATSRLLVNYPEPYRSQILDYLFKPNFGASLHILKVEIGGDGQTTDGTEPSHMHYALDENYFRGYEWWLMKEAKKRNPNITLIGLPWSFPGWLGKGFDWPYVNLQLTAYYVVTWIVGAKRYHDLDIDYIGIWNERSYNANYIKILRKMLNYQGLQRVKIIASDNLWESISASMLLDAELFKVVDVIGAHYPGTHSAKDAKLTGKKLWSSEDFSTLNSDMGAGCWGRILNQNYINGYMTSTIAWNLVASYYEQLPYGRCGLMTAQEPWSGHYVVESPVWVSAHTTQFTQPGWYYLKTVGHLEKGGSYVALTDGLGNLTIIIETMSHKHSKCIRPFLPYFNVSQQFATFVLKGSFSEIPELQVWYTKLGKTSERFLFKQLDSLWLLDSDGSFTLSLHEDELFTLTTLTTGRKGSYPLPPKSQPFPSTYKDDFNVDYPFFSEAPNFADQTGVFEYFTNIEDPGEHHFTLRQVLNQRPITWAADASNTISIIGDYNWTNLTIKCDVYIETPDTGGVFIAGRVNKGGILIRSARGIFFWIFANGSYRVTGDLAGWIIYALGRVEVTAKKWYTLTLTIKGHFTSGMLNDKSLWTDIPVNFPKNGWAAIGTHSFEFAQFDNFLVEATR.

The first 42 residues, 1 to 42, serve as a signal peptide directing secretion; sequence MAEWLLSASWQRRAKAMTAAAGSAGRAAVPLLLCALLAPGGA. Thr109 lines the substrate pocket. The N-linked (GlcNAc...) asparagine glycan is linked to Asn143. Substrate is bound by residues Trp151 and Asn197. Catalysis depends on Glu198, which acts as the Proton donor/acceptor. The Nucleophile role is filled by Glu274. A disulfide bridge links Cys287 with Cys394. Residue Asn379 is glycosylated (N-linked (GlcNAc...) asparagine). Arg396 is a binding site for substrate. N-linked (GlcNAc...) asparagine glycans are attached at residues Asn403, Asn556, Asn559, and Asn602.

This sequence belongs to the glycosyl hydrolase 59 family. As to expression, detected in urine. Detected in testis, brain and placenta (at protein level). Detected in kidney and liver.

It is found in the lysosome. The catalysed reaction is a beta-D-galactosyl-(1&lt;-&gt;1')-N-acylsphing-4-enine + H2O = an N-acylsphing-4-enine + D-galactose. The enzyme catalyses beta-D-galactosyl-(1&lt;-&gt;1)-sphing-4-enine + H2O = sphing-4-enine + D-galactose. It carries out the reaction a D-galactosylceramide + H2O = an N-acyl-sphingoid base + D-galactose. Hydrolyzes the galactose ester bonds of glycolipids such as galactosylceramide and galactosylsphingosine. Enzyme with very low activity responsible for the lysosomal catabolism of galactosylceramide, a major lipid in myelin, kidney and epithelial cells of small intestine and colon. This chain is Galactocerebrosidase, found in Homo sapiens (Human).